We begin with the raw amino-acid sequence, 338 residues long: Ketol-acid reductoisomerase (NADP(+)) (338 aa).

The 181-residue stretch at 1 to 181 (MKVYYDKDAD…GGGKAGIIET (181 aa)) folds into the KARI N-terminal Rossmann domain. Residues 24 to 27 (YGSQ), Arg47, and Ser52 each bind NADP(+). The active site involves His107. NADP(+) is bound at residue Gly133. The KARI C-terminal knotted domain maps to 182–327 (NFREETETDL…EKLRAMMPWI (146 aa)). Mg(2+) contacts are provided by Asp190, Glu194, Glu226, and Glu230. Ser251 is a binding site for substrate.

Belongs to the ketol-acid reductoisomerase family. Mg(2+) serves as cofactor.

The catalysed reaction is (2R)-2,3-dihydroxy-3-methylbutanoate + NADP(+) = (2S)-2-acetolactate + NADPH + H(+). It catalyses the reaction (2R,3R)-2,3-dihydroxy-3-methylpentanoate + NADP(+) = (S)-2-ethyl-2-hydroxy-3-oxobutanoate + NADPH + H(+). It participates in amino-acid biosynthesis; L-isoleucine biosynthesis; L-isoleucine from 2-oxobutanoate: step 2/4. Its pathway is amino-acid biosynthesis; L-valine biosynthesis; L-valine from pyruvate: step 2/4. Its function is as follows. Involved in the biosynthesis of branched-chain amino acids (BCAA). Catalyzes an alkyl-migration followed by a ketol-acid reduction of (S)-2-acetolactate (S2AL) to yield (R)-2,3-dihydroxy-isovalerate. In the isomerase reaction, S2AL is rearranged via a Mg-dependent methyl migration to produce 3-hydroxy-3-methyl-2-ketobutyrate (HMKB). In the reductase reaction, this 2-ketoacid undergoes a metal-dependent reduction by NADPH to yield (R)-2,3-dihydroxy-isovalerate. This Variovorax paradoxus (strain S110) protein is Ketol-acid reductoisomerase (NADP(+)).